A 179-amino-acid polypeptide reads, in one-letter code: Large ribosomal subunit protein bL9 (179 aa).

Positions 156–179 are disordered; the sequence is PEGAPVPVAEEPAAEAEQAEVAAE. Residues 157-166 show a composition bias toward low complexity; it reads EGAPVPVAEE. The span at 167 to 179 shows a compositional bias: acidic residues; the sequence is PAAEAEQAEVAAE.

Belongs to the bacterial ribosomal protein bL9 family.

In terms of biological role, binds to the 23S rRNA. The protein is Large ribosomal subunit protein bL9 of Porphyromonas gingivalis (strain ATCC 33277 / DSM 20709 / CIP 103683 / JCM 12257 / NCTC 11834 / 2561).